A 185-amino-acid chain; its full sequence is Ribosome-recycling factor (185 aa).

This sequence belongs to the RRF family.

It is found in the cytoplasm. In terms of biological role, responsible for the release of ribosomes from messenger RNA at the termination of protein biosynthesis. May increase the efficiency of translation by recycling ribosomes from one round of translation to another. The chain is Ribosome-recycling factor from Clostridium novyi (strain NT).